The primary structure comprises 304 residues: Porphobilinogen deaminase (304 aa).

C240 is subject to S-(dipyrrolylmethanemethyl)cysteine.

It belongs to the HMBS family. In terms of assembly, monomer. Requires dipyrromethane as cofactor.

It catalyses the reaction 4 porphobilinogen + H2O = hydroxymethylbilane + 4 NH4(+). It functions in the pathway porphyrin-containing compound metabolism; protoporphyrin-IX biosynthesis; coproporphyrinogen-III from 5-aminolevulinate: step 2/4. Functionally, tetrapolymerization of the monopyrrole PBG into the hydroxymethylbilane pre-uroporphyrinogen in several discrete steps. The sequence is that of Porphobilinogen deaminase from Xanthomonas euvesicatoria pv. vesicatoria (strain 85-10) (Xanthomonas campestris pv. vesicatoria).